The primary structure comprises 64 residues: Thrombin-like enzyme collinein-4 (64 aa).

2 cysteine pairs are disulfide-bonded: Cys5-Cys23 and Cys34-Cys51.

In terms of assembly, monomer. In terms of tissue distribution, expressed by the vanom gland.

The protein resides in the secreted. In terms of biological role, thrombin-like snake venom serine protease. The polypeptide is Thrombin-like enzyme collinein-4 (Crotalus durissus collilineatus (Brazilian rattlesnake)).